The sequence spans 287 residues: 4-hydroxybenzoate octaprenyltransferase (287 aa).

A run of 8 helical transmembrane segments spans residues 23-43 (IGSL…GGTA), 46-66 (GKLL…GCVI), 99-119 (LFVL…AMTI), 141-161 (LPQV…YAAV), 162-182 (GESL…WTVA), 213-233 (LVIG…GDLN), 237-257 (GAYY…QQLI), and 266-286 (FRAF…ILLA).

The protein belongs to the UbiA prenyltransferase family. It depends on Mg(2+) as a cofactor.

The protein resides in the cell inner membrane. The enzyme catalyses all-trans-octaprenyl diphosphate + 4-hydroxybenzoate = 4-hydroxy-3-(all-trans-octaprenyl)benzoate + diphosphate. It functions in the pathway cofactor biosynthesis; ubiquinone biosynthesis. In terms of biological role, catalyzes the prenylation of para-hydroxybenzoate (PHB) with an all-trans polyprenyl group. Mediates the second step in the final reaction sequence of ubiquinone-8 (UQ-8) biosynthesis, which is the condensation of the polyisoprenoid side chain with PHB, generating the first membrane-bound Q intermediate 3-octaprenyl-4-hydroxybenzoate. This is 4-hydroxybenzoate octaprenyltransferase from Edwardsiella ictaluri (strain 93-146).